We begin with the raw amino-acid sequence, 490 residues long: Thyroid hormone receptor alpha (490 aa).

The interval 1 to 32 is disordered; that stretch reads MEQKPSKVECGSDPEENSARSPDGKRKRKNGQ. A modulating region spans residues 1–52; it reads MEQKPSKVECGSDPEENSARSPDGKRKRKNGQCSLKTSMSGYIPSYLDKDEQ. Zn(2+)-binding residues include Cys53, Cys56, Cys70, Cys73, Cys91, Cys97, Cys107, and Cys110. 2 NR C4-type zinc fingers span residues 53–73 and 91–115; these read CVVCGDKATGYHYRCITCEGC and CKYDSCCVIDKITRNQCQLCRFKKC. Positions 53–127 form a DNA-binding region, nuclear receptor; it reads CVVCGDKATG…VGMAMDLVLD (75 aa). Residues 163 to 407 enclose the NR LBD domain; sequence EEWDLIHIAT…EGQQLLGMHV (245 aa). Arg228 and Ser277 together coordinate 3,3',5-triiodo-L-thyronine. The tract at residues 457–490 is disordered; the sequence is AVCGEDDSSEADSPSSSEEEPEVCEDLAGNAASP.

This sequence belongs to the nuclear hormone receptor family. NR1 subfamily. As to quaternary structure, binds DNA as a dimer; homodimer and heterodimer with RXRB. Interacts with NCOA3 and NCOA6 coactivators, leading to a strong increase of transcription of target genes. Probably interacts with SFPQ. Interacts with C1D. Interacts with AKAP13. Interacts with TP53INP2. Interacts with PER2. Isoform alpha-2 and isoform alpha-1 interact with TACC1, but the interaction with alpha-1 is weaker. The interaction with isoform alpha-1, but not alpha-2, is decreased in the presence of thyroid hormone T3.

It localises to the nucleus. The protein resides in the cytoplasm. Functionally, nuclear hormone receptor that can act as a repressor or activator of transcription. High affinity receptor for thyroid hormones, including triiodothyronine and thyroxine. In terms of biological role, does not bind thyroid hormone and functions as a weak dominant negative inhibitor of thyroid hormone action. The polypeptide is Thyroid hormone receptor alpha (THRA) (Homo sapiens (Human)).